We begin with the raw amino-acid sequence, 496 residues long: UDP-N-acetylmuramate--L-alanine ligase (496 aa).

122–128 (GTHGKTT) lines the ATP pocket.

It belongs to the MurCDEF family.

The protein resides in the cytoplasm. The enzyme catalyses UDP-N-acetyl-alpha-D-muramate + L-alanine + ATP = UDP-N-acetyl-alpha-D-muramoyl-L-alanine + ADP + phosphate + H(+). Its pathway is cell wall biogenesis; peptidoglycan biosynthesis. In terms of biological role, cell wall formation. This Mycolicibacterium paratuberculosis (strain ATCC BAA-968 / K-10) (Mycobacterium paratuberculosis) protein is UDP-N-acetylmuramate--L-alanine ligase.